Consider the following 425-residue polypeptide: MVSLTDLFLASLLVPTSPWLCLPPRIDTIDQRGGRVTLKQVRNPRGHKAFNPARATYRTFLKYGVPAPDYIKKAVAHIDEEQEEAFARIKRDTGSAAAIPINEVDIAYVTPVTIGTPPQTLMLDLDTGSSDLWVFSSLTPSNQVRGQEIYSPTKSSTSKLLSGHTWSIRYGDGSGSRGTVYTDNFTIGGLEVKSQAVQAALEVSSMLTQEQSLDGLVGLGFSALNTVRPSSQLTFFDNARPNLDEEVFTADLKYHATGSYDFGFIDSKKYAGNITYTAVQQSPGYWTHSLSGYSVGSGAFQASQISGISDTGTTLLYLPTAIVTAYYRQVQGAQNSQYYGGYVFPCSSTLPTFTFGIEGARFTIPASYINYTRISPTSTTCYGGLQSSSGLGINIFGDVALKRAFVVFSGTNPPRIGFAIKPLAS.

The signal sequence occupies residues 1–28 (MVSLTDLFLASLLVPTSPWLCLPPRIDT). Positions 29-91 (IDQRGGRVTL…QEEAFARIKR (63 aa)) are cleaved as a propeptide — activation peptide. In terms of domain architecture, Peptidase A1 spans 108–419 (YVTPVTIGTP…GTNPPRIGFA (312 aa)). The active site involves D126. Residues N184 and N273 are each glycosylated (N-linked (GlcNAc...) asparagine). Residue D310 is part of the active site. A disulfide bond links C346 and C381. N370 is a glycosylation site (N-linked (GlcNAc...) asparagine).

This sequence belongs to the peptidase A1 family.

This is Podosporapepsin (PAPA) from Podospora anserina (Pleurage anserina).